The chain runs to 325 residues: Ribosomal RNA small subunit methyltransferase H (325 aa).

S-adenosyl-L-methionine-binding positions include 39–41 (GGH), aspartate 59, phenylalanine 90, aspartate 108, and glutamine 115.

Belongs to the methyltransferase superfamily. RsmH family.

The protein localises to the cytoplasm. It catalyses the reaction cytidine(1402) in 16S rRNA + S-adenosyl-L-methionine = N(4)-methylcytidine(1402) in 16S rRNA + S-adenosyl-L-homocysteine + H(+). Specifically methylates the N4 position of cytidine in position 1402 (C1402) of 16S rRNA. The polypeptide is Ribosomal RNA small subunit methyltransferase H (Leptothrix cholodnii (strain ATCC 51168 / LMG 8142 / SP-6) (Leptothrix discophora (strain SP-6))).